The primary structure comprises 1334 residues: Aldehyde oxidase 1 (1334 aa).

The 88-residue stretch at 5–92 (PELLFYVNGR…GAAVTTVEGI (88 aa)) folds into the 2Fe-2S ferredoxin-type domain. The [2Fe-2S] cluster site is built by Cys-44, Cys-49, Cys-52, and Cys-74. Gln-113 is a Mo-molybdopterin binding site. [2Fe-2S] cluster is bound by residues Cys-114, Cys-117, Cys-149, and Cys-151. Cys-151 is a binding site for Mo-molybdopterin. The 186-residue stretch at 236-421 (FSGERMMWIS…ASVHIPYSRK (186 aa)) folds into the FAD-binding PCMH-type domain. FAD-binding positions include 264–271 (VVMGNTSV), Ala-345, Ser-354, His-358, Asp-367, and Leu-411. Mo-molybdopterin-binding positions include 802–803 (AF) and Met-1043. A Phosphoserine modification is found at Ser-1064. Mo-molybdopterin contacts are provided by residues 1084 to 1087 (GSVV), Gln-1199, and Leu-1264. Residue Glu-1266 is the Proton acceptor; for azaheterocycle hydroxylase activity of the active site.

The protein belongs to the xanthine dehydrogenase family. In terms of assembly, homodimer. [2Fe-2S] cluster serves as cofactor. Requires FAD as cofactor. Mo-molybdopterin is required as a cofactor. The N-terminus is blocked. In terms of tissue distribution, very high expression in liver and lung. High expression in kidney, pancreas, brain stem and spinal cord. Moderate expression in heart, testis, eye, cerebral cortex and cerebellum. Low expression in stomach and muscle.

It localises to the cytoplasm. The catalysed reaction is an aldehyde + O2 + H2O = a carboxylate + H2O2 + H(+). It carries out the reaction retinal + O2 + H2O = retinoate + H2O2 + H(+). It catalyses the reaction all-trans-retinal + O2 + H2O = all-trans-retinoate + H2O2 + H(+). With respect to regulation, inhibited by hydralazine and menadione. Not inhibited by BOF-4272 or allopurinol, xanthine dehydrogenase potent inhibitors. In contrast to guinea pig, human and rat, isovanillin is not an inhibitor but a substrate for AOX1 in rabbit. In terms of biological role, oxidase with broad substrate specificity, oxidizing aromatic azaheterocycles, such as N1-methylnicotinamide, N-methylphthalazinium and phthalazine, as well as aldehydes, such as benzaldehyde, retinal, pyridoxal, and vanillin. Plays a key role in the metabolism of xenobiotics and drugs containing aromatic azaheterocyclic substituents. Participates in the bioactivation of prodrugs such as famciclovir, catalyzing the oxidation step from 6-deoxypenciclovir to penciclovir, which is a potent antiviral agent. Is probably involved in the regulation of reactive oxygen species homeostasis. May be a prominent source of superoxide generation via the one-electron reduction of molecular oxygen. May also catalyze nitric oxide (NO) production via the reduction of nitrite to NO with NADH or aldehyde as electron donor. May play a role in adipogenesis. Cannot use hypoxanthine and all-trans-retinol as substrate. The sequence is that of Aldehyde oxidase 1 from Oryctolagus cuniculus (Rabbit).